The sequence spans 307 residues: Tyrosine recombinase XerC (307 aa).

One can recognise a Core-binding (CB) domain in the interval 9-95 (ETLSLAIDSF…ALRSFLDWQV (87 aa)). In terms of domain architecture, Tyr recombinase spans 116–296 (HLPKNMDVDE…DFQHLAKVYD (181 aa)). Catalysis depends on residues arginine 155, lysine 179, histidine 248, arginine 251, and histidine 274. Tyrosine 283 functions as the O-(3'-phospho-DNA)-tyrosine intermediate in the catalytic mechanism.

Belongs to the 'phage' integrase family. XerC subfamily. As to quaternary structure, forms a cyclic heterotetrameric complex composed of two molecules of XerC and two molecules of XerD, in which XerC interacts with XerD via its C-terminal region, XerD interacts with XerC via its C-terminal region and so on.

Its subcellular location is the cytoplasm. With respect to regulation, ftsK may regulate the catalytic switch between XerC and XerD in the heterotetrameric complex during the two steps of the recombination process. Site-specific tyrosine recombinase, which acts by catalyzing the cutting and rejoining of the recombining DNA molecules. Binds cooperatively to specific DNA consensus sequences that are separated from XerD binding sites by a short central region, forming the heterotetrameric XerC-XerD complex that recombines DNA substrates. The complex is essential to convert dimers of the bacterial chromosome into monomers to permit their segregation at cell division. It also contributes to the segregational stability of plasmids. In the complex XerC specifically exchanges the top DNA strands. In Proteus mirabilis, this protein is Tyrosine recombinase XerC.